The primary structure comprises 276 residues: AT-hook motif nuclear-localized protein 17 (276 aa).

Residues 1–10 (MKGEYREQKS) show a composition bias toward basic and acidic residues. Disordered regions lie at residues 1–80 (MKGE…RDTD) and 212–248 (AEEEQKHSAGTGEREGQSPPVSGGGEESGQMAGSGGE). 2 stretches are compositionally biased toward low complexity: residues 20-31 (HQQQQQQQQQQH) and 40-49 (SSTVTPTVDD). A DNA-binding region (a.T hook) is located at residues 56–68 (RRPRGRPPGSKNK). Residues 80–230 (DPPMSPYILE…GTGEREGQSP (151 aa)) form the PPC domain. Residues 212-227 (AEEEQKHSAGTGEREG) are compositionally biased toward basic and acidic residues. A compositionally biased stretch (gly residues) spans 233-248 (SGGGEESGQMAGSGGE).

The protein resides in the nucleus. In terms of biological role, transcription factor that specifically binds AT-rich DNA sequences related to the nuclear matrix attachment regions (MARs). This is AT-hook motif nuclear-localized protein 17 from Arabidopsis thaliana (Mouse-ear cress).